Consider the following 617-residue polypeptide: UvrABC system protein C (617 aa).

One can recognise a GIY-YIG domain in the interval 22–100 (NLPGVYRFFN…IKALSPKYNI (79 aa)). A UVR domain is found at 209–244 (DELTRTLQHKMQTAAANLQFEEAARYRDQIQALGIM).

It belongs to the UvrC family. As to quaternary structure, interacts with UvrB in an incision complex.

Its subcellular location is the cytoplasm. In terms of biological role, the UvrABC repair system catalyzes the recognition and processing of DNA lesions. UvrC both incises the 5' and 3' sides of the lesion. The N-terminal half is responsible for the 3' incision and the C-terminal half is responsible for the 5' incision. In Neisseria meningitidis serogroup B (strain ATCC BAA-335 / MC58), this protein is UvrABC system protein C.